Consider the following 141-residue polypeptide: Nucleoside diphosphate kinase (141 aa).

The ATP site is built by Lys-11, Phe-59, Arg-87, Thr-93, Arg-104, and Asn-114. His-117 serves as the catalytic Pros-phosphohistidine intermediate.

It belongs to the NDK family. In terms of assembly, homotetramer. The cofactor is Mg(2+).

The protein resides in the cytoplasm. The enzyme catalyses a 2'-deoxyribonucleoside 5'-diphosphate + ATP = a 2'-deoxyribonucleoside 5'-triphosphate + ADP. It carries out the reaction a ribonucleoside 5'-diphosphate + ATP = a ribonucleoside 5'-triphosphate + ADP. Major role in the synthesis of nucleoside triphosphates other than ATP. The ATP gamma phosphate is transferred to the NDP beta phosphate via a ping-pong mechanism, using a phosphorylated active-site intermediate. This is Nucleoside diphosphate kinase from Azoarcus sp. (strain BH72).